Here is a 463-residue protein sequence, read N- to C-terminus: Stress-activated protein kinase jnk-1 (463 aa).

Over residues 1–12 (MEERLSTTSSYP) the composition is skewed to polar residues. Positions 1 to 23 (MEERLSTTSSYPSHPGRSVEEDH) are disordered. The 294-residue stretch at 119-412 (YQNLRLIGSG…ISVDDALRHP (294 aa)) folds into the Protein kinase domain. Residues 126–131 (GSGAQG) and Lys148 contribute to the ATP site. Catalysis depends on Asp244, which acts as the Proton acceptor. Thr276 bears the Phosphothreonine mark. Residues 276 to 278 (TPY) carry the TXY motif. Tyr278 carries the phosphotyrosine modification.

This sequence belongs to the protein kinase superfamily. CMGC Ser/Thr protein kinase family. MAP kinase subfamily. Binds to the scaffolding protein, unc-16. Unc-16 also binds other components of the JNK signaling pathway. Interacts with daf-16. Mg(2+) serves as cofactor. In terms of processing, dually phosphorylated on Thr-276 and Tyr-278, which activates the enzyme. Expressed in most neurons, including nerve ring, head ganglions, dorsal and ventral nerve cords and tail ganglions. The Thr-276/Tyr-278 phosphorylated form is present in the nerve ring upon heat exposure.

It is found in the cytoplasm. The protein localises to the perikaryon. The protein resides in the cell projection. It localises to the axon. It catalyses the reaction L-seryl-[protein] + ATP = O-phospho-L-seryl-[protein] + ADP + H(+). The catalysed reaction is L-threonyl-[protein] + ATP = O-phospho-L-threonyl-[protein] + ADP + H(+). With respect to regulation, activated by threonine and tyrosine phosphorylation by either of the dual specificity kinases, jkk-1 and mek-1. In terms of biological role, serine/threonine-protein kinase which responds to activation by environmental stress by phosphorylating a number of transcription factors such as daf-16, and thus regulates transcriptional activity. By phosphorylating daf-16, plays a role in daf-16 nuclear translocation in intestinal cells in response to environmental stresses such as heat and oxidative stresses. Downstream of jkk-1, may coordinate locomotion via type-D GABAergic motoneurons and regulates synaptic vesicle transport in conjunction with unc-16. Independently of jkk-1, may regulate some mechanosensory responses, such as response to touch. Independently of jkk-1 and downstream of mek-1, plays a role in resistance to heavy metals, such as Cu(2+) or Cd(2+). Regulates germline cell apoptosis in response to heavy metals such as Cu(2+) and arsenite. Required for dopaminergic CEP neuron degeneration in response to Mn(2+). Required for normal sleep bout quantity and arousal thresholds during the transition from the last larval stage to adulthood in well-fed animals. Downstream of jkk-1 but independently of mek-1, positively regulates lifespan. The polypeptide is Stress-activated protein kinase jnk-1 (jnk-1) (Caenorhabditis elegans).